The chain runs to 122 residues: Chorismate mutase AroH (122 aa).

In terms of domain architecture, Chorismate mutase aroH-type spans 2–120 (VRGIRGAITV…AVRLRPDLES (119 aa)). Prephenate contacts are provided by R6, R89, and Y107.

As to quaternary structure, homotrimer.

The protein localises to the cytoplasm. It carries out the reaction chorismate = prephenate. Its pathway is metabolic intermediate biosynthesis; prephenate biosynthesis; prephenate from chorismate: step 1/1. Its activity is regulated as follows. Inhibited by 40% with 500 uM tyrosine, and a tyrosine concentration as high as 5 mM reduced activity to 5%. Catalyzes the Claisen rearrangement of chorismate to prephenate. Probably involved in the aromatic amino acid biosynthesis. This chain is Chorismate mutase AroH, found in Thermus thermophilus.